Here is a 290-residue protein sequence, read N- to C-terminus: Acetyl-coenzyme A carboxylase carboxyl transferase subunit beta (290 aa).

One can recognise a CoA carboxyltransferase N-terminal domain in the interval 28-290 (LMNKCSKCGT…TVREGLSHGG (263 aa)). Zn(2+) contacts are provided by cysteine 32, cysteine 35, cysteine 51, and cysteine 54. The C4-type zinc finger occupies 32-54 (CSKCGTIQYSKELDKNLKVCSSC).

The protein belongs to the AccD/PCCB family. As to quaternary structure, acetyl-CoA carboxylase is a heterohexamer composed of biotin carboxyl carrier protein (AccB), biotin carboxylase (AccC) and two subunits each of ACCase subunit alpha (AccA) and ACCase subunit beta (AccD). Zn(2+) serves as cofactor.

The protein resides in the cytoplasm. The catalysed reaction is N(6)-carboxybiotinyl-L-lysyl-[protein] + acetyl-CoA = N(6)-biotinyl-L-lysyl-[protein] + malonyl-CoA. The protein operates within lipid metabolism; malonyl-CoA biosynthesis; malonyl-CoA from acetyl-CoA: step 1/1. Component of the acetyl coenzyme A carboxylase (ACC) complex. Biotin carboxylase (BC) catalyzes the carboxylation of biotin on its carrier protein (BCCP) and then the CO(2) group is transferred by the transcarboxylase to acetyl-CoA to form malonyl-CoA. This chain is Acetyl-coenzyme A carboxylase carboxyl transferase subunit beta, found in Paenibacillus sp. (strain JDR-2).